A 118-amino-acid polypeptide reads, in one-letter code: Succinate dehydrogenase assembly factor 1, mitochondrial (118 aa).

An LYR motif 1; required for interaction with HSC20 motif is present at residues 14–16 (LYR). Positions 53-55 (LYR) match the LYR motif 2; not required for interaction with HSC20 motif. Residues 53-65 (LYRRGRRQLQMLR) are interaction with SDHB. A disordered region spans residues 72–118 (MGAFVRTRGPTEESNGAGAPGTLSGEGDDPRKPLDSMRTPKTPLDGR).

This sequence belongs to the complex I LYR family. SDHAF1 subfamily. In terms of assembly, interacts with SDHB within an SDHA-SDHB subcomplex. Also interacts with the iron-sulfur transfer complex formed by HSC20, HSPA9 and ISCU through direct binding to HSC20. Binding of SDHAF1 to SDHB precedes and is necessary for recruitment of the iron-sulfur transfer complex by SDHAF1.

It is found in the mitochondrion matrix. Plays an essential role in the assembly of succinate dehydrogenase (SDH), an enzyme complex (also referred to as respiratory complex II) that is a component of both the tricarboxylic acid (TCA) cycle and the mitochondrial electron transport chain, and which couples the oxidation of succinate to fumarate with the reduction of ubiquinone (coenzyme Q) to ubiquinol. Promotes maturation of the iron-sulfur protein subunit SDHB of the SDH catalytic dimer, protecting it from the deleterious effects of oxidants. May act together with SDHAF3. Contributes to iron-sulfur cluster incorporation into SDHB by binding to SDHB and recruiting the iron-sulfur transfer complex formed by HSC20, HSPA9 and ISCU through direct binding to HSC20. The sequence is that of Succinate dehydrogenase assembly factor 1, mitochondrial from Bos taurus (Bovine).